The sequence spans 225 residues: Probable polyketide biosynthesis zinc-dependent hydrolase BaeB (225 aa).

Zn(2+)-binding residues include His-62, His-64, Asp-66, His-67, His-123, Asp-140, and His-181.

Belongs to the metallo-beta-lactamase superfamily. It depends on Zn(2+) as a cofactor.

Its subcellular location is the cytoplasm. It functions in the pathway antibiotic biosynthesis; bacillaene biosynthesis. Probably involved in some intermediate steps for the synthesis of the antibiotic polyketide bacillaene which is involved in secondary metabolism. In Bacillus velezensis (strain DSM 23117 / BGSC 10A6 / LMG 26770 / FZB42) (Bacillus amyloliquefaciens subsp. plantarum), this protein is Probable polyketide biosynthesis zinc-dependent hydrolase BaeB (baeB).